A 326-amino-acid chain; its full sequence is MSDRQAAEGPAFWSPAARRGSAGGVGDRRGVEESQAAASEKEDLESTNVSSPLASASDPAAESSPYRPQMVSPASKDTTEDLQNVAGASEGQAPGEQAALPAGQTQVLSEMAKYQAPQRPEDTVMIQSEHTGAIDVLSADLESADLLGDHRKVSPPLMAPPCVWTFAKVKEFKSKLGKEKNSRLVVKRGEVVTIRVPTHPEGKRVCWEFATDDYDIGFGVYFDWTPVTSTDITVQVSDSSEDEEEEEDEEEEIEEPVPVGDVERGSRSSLRGRYGEVMPVYRRDSHRDVQAGSHDYPGEGIYLLKFDNSYSLLRNKTLYFHIYYTS.

The segment at 1–99 is disordered; that stretch reads MSDRQAAEGP…EGQAPGEQAA (99 aa). The span at 50-65 shows a compositional bias: low complexity; the sequence is SSPLASASDPAAESSP. Residues 160-324 enclose the GOLD domain; it reads PPCVWTFAKV…NKTLYFHIYY (165 aa). Position 170 is an N6-acetyllysine (K170). The segment at 234–268 is disordered; the sequence is VQVSDSSEDEEEEEDEEEEIEEPVPVGDVERGSRS. Positions 239-255 are enriched in acidic residues; the sequence is SSEDEEEEEDEEEEIEE.

This Mus musculus (Mouse) protein is Protein TMED8 (Tmed8).